A 950-amino-acid chain; its full sequence is Double-stranded RNA-binding protein Staufen homolog (950 aa).

3 disordered regions span residues 25–168, 202–274, and 288–342; these read VSGA…QQQQ, QQQL…QPST, and VTPV…NTKE. The segment covering 31–43 has biased composition (low complexity); sequence QQRSMMSQQRGGS. A compositionally biased stretch (polar residues) spans 45–66; sequence AINSSKSPYQLQTSSISQFSHL. Over residues 67–77 the composition is skewed to low complexity; that stretch reads QQQQQQQQQQQ. Residues 78 to 122 show a composition bias toward polar residues; it reads LVNNYHKQKQMSPDITSHQFSSSTGGGMPTQNGNYQSMSGSSIHT. 3 stretches are compositionally biased toward low complexity: residues 130–143, 153–168, and 202–253; these read QLSL…YSSQ, QQHH…QQQQ, and QQQL…ILQH. The segment covering 254–274 has biased composition (polar residues); sequence SPTSGKSLSSAPHGTSVQPST. Positions 313 to 322 are enriched in basic and acidic residues; that stretch reads SGRDSVHVSD. DRBM domains are found at residues 344 to 411, 435 to 546, 578 to 645, and 690 to 758; these read TPMC…ETKC, TPTV…ILKN, SEIS…ELRK, and NPIS…LLGY. Disordered regions lie at residues 758–833 and 922–950; these read YTKP…HTAS and DIHP…DFSK. The segment covering 765–782 has biased composition (polar residues); the sequence is PTKSSFKNPSTGEAGQTN. The span at 922–937 shows a compositional bias: basic and acidic residues; the sequence is DIHPGGDGPQVKKDVL.

In terms of tissue distribution, strongly expressed in nervous tissue (at protein level).

The protein localises to the perikaryon. Its subcellular location is the cell projection. Functionally, RNA-binding protein which is required for syntaxin location in sensory neurons during long-term synaptic facilitation. Binds to syntaxin mRNA and is required to maintain its accumulation at the axon hillock following neuronal stimulation and at the opposite pole in stable unstimulated sensory neurons. The chain is Double-stranded RNA-binding protein Staufen homolog from Aplysia californica (California sea hare).